The chain runs to 400 residues: Acetate kinase (400 aa).

Mg(2+) is bound at residue Asn-7. Position 14 (Lys-14) interacts with ATP. Arg-91 contacts substrate. Asp-148 functions as the Proton donor/acceptor in the catalytic mechanism. ATP is bound by residues 208–212, 283–285, and 331–335; these read HVGNG, DMR, and GVGEN. Glu-385 contributes to the Mg(2+) binding site.

It belongs to the acetokinase family. Homodimer. Requires Mg(2+) as cofactor. Mn(2+) serves as cofactor.

Its subcellular location is the cytoplasm. The enzyme catalyses acetate + ATP = acetyl phosphate + ADP. It participates in metabolic intermediate biosynthesis; acetyl-CoA biosynthesis; acetyl-CoA from acetate: step 1/2. In terms of biological role, catalyzes the formation of acetyl phosphate from acetate and ATP. Can also catalyze the reverse reaction. The sequence is that of Acetate kinase from Parabacteroides distasonis (strain ATCC 8503 / DSM 20701 / CIP 104284 / JCM 5825 / NCTC 11152).